The primary structure comprises 285 residues: CCR4-NOT transcription complex subunit 7 (285 aa).

5 residues coordinate a divalent metal cation: Asp-40, Glu-42, Asp-161, Asp-230, and Glu-278.

Belongs to the CAF1 family. As to quaternary structure, component of the CCR4-NOT complex. Requires Mn(2+) as cofactor. The cofactor is Mg(2+). It depends on Co(2+) as a cofactor.

The protein resides in the nucleus. It localises to the cytoplasm. The enzyme catalyses Exonucleolytic cleavage of poly(A) to 5'-AMP.. Has 3'-5' poly(A) exoribonuclease activity for synthetic poly(A) RNA substrate. Catalytic component of the CCR4-NOT complex which is one of the major cellular mRNA deadenylases and is linked to various cellular processes including bulk mRNA degradation, miRNA-mediated repression, translational repression during translational initiation and general transcription regulation. During miRNA-mediated repression the complex also seems to act as translational repressor during translational initiation. Additional complex functions may be a consequence of its influence on mRNA expression. The chain is CCR4-NOT transcription complex subunit 7 (CNOT7) from Gallus gallus (Chicken).